The primary structure comprises 131 residues: MWKEFKEFAMRGNVVDLAVGVIIGGAFGKIVSSLVNDILMPLVGLLLGGVDFSGLSWKFGKAVVKYGMFIQTVVDFFIISFSIFVFVKVLNKLYWHNKKEEEIKDTAPTLTKEEELLMEIRDLLKQQRETR.

3 helical membrane passes run 8–28 (FAMR…GAFG), 30–50 (IVSS…LGGV), and 67–87 (GMFI…FVFV).

This sequence belongs to the MscL family. In terms of assembly, homopentamer.

Its subcellular location is the cell membrane. Channel that opens in response to stretch forces in the membrane lipid bilayer. May participate in the regulation of osmotic pressure changes within the cell. The sequence is that of Large-conductance mechanosensitive channel from Geobacillus sp. (strain WCH70).